A 499-amino-acid polypeptide reads, in one-letter code: MEEVFQNETIKQILAKYRRIWAIGHAQSVLGWDLEVNMPKEGILERSVAQGELSVLSHELLLHPEFVNLVEKAKGLENLNEYERGIVRVLDRSIRIARAFPPEFIREVSETTSLATKAWEEAKAKDDFSKFEPWLDKIISLAKRAAEYLGYEEEPYDALLDLYEEGLRTRDVEKMFEVLEKKLKPLLDKILEEGKVPREHPLEKEKYEREWMERVNLWILQKFGFPLGTRARLDVSAHPFTTEFGIRDVRITTRYEGYDFRRTILSTVHEFGHALYELQQDERFMFTPIAGGVSLGIHESQSRFWENIIGRSKEFVELIYPVLKENLPFMSNYTPEDVYLYFNIVRPDFIRTEADVVTYNFHILLRFKLERLMVSEEIKAKDLPEMWNDEMERLLGIRPRKYSEGILQDIHWAHGSIGYFPTYTIGTLLSAQLYYHIKKDIPDFEEKVAKAEFDPIKAWLREKIHRWGSIYPPKELLKKAIGEDMDAEYFVRWVKEKYL.

The Peptidase M32 domain maps to Q6 to L499. The HPF signature appears at H238 to F240. The short motif at D248 to T252 is the DXRXT element. Residue H269 participates in Co(2+) binding. The short motif at H269–H273 is the HEXXH element. The Proton donor/acceptor role is filled by E270. Residues H273 and E299 each contribute to the Co(2+) site. The HES/GQ motif lies at H298–Q301. The short motif at I350–D355 is the I/NRXXA/SD element. A GXXQDXHW motif is present at residues G405 to W412.

Belongs to the peptidase M32 family. In terms of assembly, homodimer. Co(2+) serves as cofactor. It depends on Mn(2+) as a cofactor.

It carries out the reaction Release of a C-terminal amino acid with broad specificity, except for -Pro.. Its activity is regulated as follows. EDTA and DTT reversibly abolish carboxypeptidase activity. Broad specificity carboxypetidase that releases amino acids sequentially from the C-terminus, including neutral, aromatic, polar and basic residues, but not Pro, Gly, Asp and Glu. The sequence is that of Thermostable carboxypeptidase 1 from Pyrococcus furiosus (strain ATCC 43587 / DSM 3638 / JCM 8422 / Vc1).